The following is a 315-amino-acid chain: Thioredoxin reductase (315 aa).

Position 45–52 (45–52) interacts with FAD; the sequence is EGSTPGGK. An intrachain disulfide couples cysteine 145 to cysteine 148. 288-297 provides a ligand contact to FAD; it reads DCRSKHFRQI.

It belongs to the class-II pyridine nucleotide-disulfide oxidoreductase family. As to quaternary structure, homodimer. Requires FAD as cofactor.

It is found in the cytoplasm. It catalyses the reaction [thioredoxin]-dithiol + NADP(+) = [thioredoxin]-disulfide + NADPH + H(+). The chain is Thioredoxin reductase (trxB) from Mycoplasma pneumoniae (strain ATCC 29342 / M129 / Subtype 1) (Mycoplasmoides pneumoniae).